Reading from the N-terminus, the 251-residue chain is MASEQEKTADFGFRTVAKDEKEVMVAEVFHSVAAKYDLMNDLMSFGIHRIWKRFTIECSGVRRNQRVLDLAGGTGDLTAKFSRMVGEGGEVILADINASMLKVGREKLRNKGIIDNINYVQANAEALPFPDDFFDCITISFGLRNVTDKNKALRSMYRVLKPGGRLLVLEFSKPVIKQLSTIYDAYSFHILPRIGEAVASDAGSYRYLAESIRMHPDQETLKGMMSDAGFDSVNYFNLTGGIVALHRGFKF.

S-adenosyl-L-methionine contacts are provided by residues T74, D95, 123 to 124 (NA), and S140.

This sequence belongs to the class I-like SAM-binding methyltransferase superfamily. MenG/UbiE family.

The catalysed reaction is a 2-demethylmenaquinol + S-adenosyl-L-methionine = a menaquinol + S-adenosyl-L-homocysteine + H(+). It catalyses the reaction a 2-methoxy-6-(all-trans-polyprenyl)benzene-1,4-diol + S-adenosyl-L-methionine = a 5-methoxy-2-methyl-3-(all-trans-polyprenyl)benzene-1,4-diol + S-adenosyl-L-homocysteine + H(+). Its pathway is quinol/quinone metabolism; menaquinone biosynthesis; menaquinol from 1,4-dihydroxy-2-naphthoate: step 2/2. The protein operates within cofactor biosynthesis; ubiquinone biosynthesis. In terms of biological role, methyltransferase required for the conversion of demethylmenaquinol (DMKH2) to menaquinol (MKH2) and the conversion of 2-polyprenyl-6-methoxy-1,4-benzoquinol (DDMQH2) to 2-polyprenyl-3-methyl-6-methoxy-1,4-benzoquinol (DMQH2). This chain is Ubiquinone/menaquinone biosynthesis C-methyltransferase UbiE, found in Pectobacterium atrosepticum (strain SCRI 1043 / ATCC BAA-672) (Erwinia carotovora subsp. atroseptica).